The sequence spans 203 residues: Ribosome maturation factor RimP (203 aa).

Positions 1–21 are enriched in polar residues; it reads MSDSEATTSTDRSESNSTATI. The tract at residues 1-23 is disordered; sequence MSDSEATTSTDRSESNSTATIHN.

Belongs to the RimP family.

Its subcellular location is the cytoplasm. Its function is as follows. Required for maturation of 30S ribosomal subunits. The sequence is that of Ribosome maturation factor RimP from Paenarthrobacter aurescens (strain TC1).